Consider the following 295-residue polypeptide: Pyridoxal 5'-phosphate synthase subunit PdxS (295 aa).

Aspartate 25 contributes to the D-ribose 5-phosphate binding site. Lysine 82 acts as the Schiff-base intermediate with D-ribose 5-phosphate in catalysis. Residue glycine 154 participates in D-ribose 5-phosphate binding. Arginine 166 serves as a coordination point for D-glyceraldehyde 3-phosphate. D-ribose 5-phosphate contacts are provided by residues glycine 215 and 236–237; that span reads GS.

It belongs to the PdxS/SNZ family. As to quaternary structure, in the presence of PdxT, forms a dodecamer of heterodimers.

It carries out the reaction aldehydo-D-ribose 5-phosphate + D-glyceraldehyde 3-phosphate + L-glutamine = pyridoxal 5'-phosphate + L-glutamate + phosphate + 3 H2O + H(+). It functions in the pathway cofactor biosynthesis; pyridoxal 5'-phosphate biosynthesis. Catalyzes the formation of pyridoxal 5'-phosphate from ribose 5-phosphate (RBP), glyceraldehyde 3-phosphate (G3P) and ammonia. The ammonia is provided by the PdxT subunit. Can also use ribulose 5-phosphate and dihydroxyacetone phosphate as substrates, resulting from enzyme-catalyzed isomerization of RBP and G3P, respectively. The chain is Pyridoxal 5'-phosphate synthase subunit PdxS from Bacillus cereus (strain B4264).